We begin with the raw amino-acid sequence, 291 residues long: tRNA U34 carboxymethyltransferase (291 aa).

Carboxy-S-adenosyl-L-methionine-binding positions include K61, W75, K80, G100, 122 to 124, 149 to 150, Y169, and R284; these read DPS and VE.

This sequence belongs to the class I-like SAM-binding methyltransferase superfamily. CmoB family. Homotetramer.

The enzyme catalyses carboxy-S-adenosyl-L-methionine + 5-hydroxyuridine(34) in tRNA = 5-carboxymethoxyuridine(34) in tRNA + S-adenosyl-L-homocysteine + H(+). Functionally, catalyzes carboxymethyl transfer from carboxy-S-adenosyl-L-methionine (Cx-SAM) to 5-hydroxyuridine (ho5U) to form 5-carboxymethoxyuridine (cmo5U) at position 34 in tRNAs. In Campylobacter jejuni subsp. jejuni serotype O:2 (strain ATCC 700819 / NCTC 11168), this protein is tRNA U34 carboxymethyltransferase.